A 110-amino-acid chain; its full sequence is MSSSPLSSSLFHPLSTLSTHCHGRRQNLCFNRKQQPFVVRAAKLPEGVIVPKAQPKSQPAFLGFTQTAEIWNSRACMIGLIGTFIVELILNKGILELIGVEIGKGLDLPL.

Residues 1–41 constitute a chloroplast transit peptide; the sequence is MSSSPLSSSLFHPLSTLSTHCHGRRQNLCFNRKQQPFVVRA. Residues 42-74 are Stromal-facing; the sequence is AKLPEGVIVPKAQPKSQPAFLGFTQTAEIWNSR. The chain crosses the membrane as a helical span at residues 75–95; it reads ACMIGLIGTFIVELILNKGIL. Topologically, residues 96–110 are lumenal; that stretch reads ELIGVEIGKGLDLPL.

Belongs to the ELIP/psbS family. May bind chlorophyll and form dimers in the thylakoid membrane. Component of a high molecular weight complex containing OHP1, OHP2 and HCF244, and PSII core proteins D1/D2, HCF136 and HCF173. Interacts with HCF244. Forms a trimeric complex with OHP2 and HCF244 that mutually stabilizes each subunit. As to expression, mostly expressed in cotyledons and shoot apices.

The protein resides in the plastid. Its subcellular location is the chloroplast thylakoid membrane. Its function is as follows. May play a photoprotective role in the thylakoid membrane in response to light stress. Involved in photosystems I (PSI) and II (PSII) core proteins function. Forms a trimeric complex with OHP2 and HCF244 that is required to promote PSII core subunit assembly. The trimeric complex forms a transient PSII reaction center-like complex with PsbA, PsbD, PsbE, PsbF and PsbI subunits in thylakoids for early assembly of PSII as well as PSII repair. The trimeric complex is required for the recruitment of ribosomes to the psbA mRNA during PSII biogenesis and repair. Forms a heterodimer with OHP1 that binds chlorophylls and carotenoids, and that may function in the delivery of pigments to the PsbA subunit of PSII. The polypeptide is Light-harvesting complex-like protein OHP1, chloroplastic (Arabidopsis thaliana (Mouse-ear cress)).